The sequence spans 761 residues: Protein transport protein SEC23 C (761 aa).

The Zn(2+) site is built by C60, C63, C82, and C85. The segment at 60–85 (CRTCRSVLNPYSVVDFSACNWGCPFC) is zinc finger-like.

Belongs to the SEC23/SEC24 family. SEC24 subfamily. As to quaternary structure, component of the coat protein complex II (COPII), composed of at least five proteins: the Sec23/24 complex, the Sec13/31 complex and Sar1.

It localises to the cytoplasmic vesicle. The protein resides in the COPII-coated vesicle membrane. It is found in the endoplasmic reticulum membrane. Its subcellular location is the membrane. Its function is as follows. Component of the coat protein complex II (COPII) which promotes the formation of transport vesicles from the endoplasmic reticulum (ER). The coat has two main functions, the physical deformation of the endoplasmic reticulum membrane into vesicles and the selection of cargo molecules. This chain is Protein transport protein SEC23 C, found in Arabidopsis thaliana (Mouse-ear cress).